The sequence spans 131 residues: Synaptobrevin-like protein (131 aa).

Over 1 to 81 (MLHITTMTDK…KRKFWWKNCK (81 aa)) the chain is Cytoplasmic. Residues 18 to 78 (RLQQTQAQVN…GKLKRKFWWK (61 aa)) form the v-SNARE coiled-coil homology domain. The chain crosses the membrane as a helical; Anchor for type IV membrane protein span at residues 82-102 (MLAVLGVLVVILIIVLIVWVV). Over 103–131 (SEQKNKVEQSEHSSHHLVMDNSSHLLSEQ) the chain is Vesicular. The tract at residues 112–131 (SEHSSHHLVMDNSSHLLSEQ) is disordered. A compositionally biased stretch (polar residues) spans 122–131 (DNSSHLLSEQ).

Belongs to the synaptobrevin family.

Its subcellular location is the cytoplasmic vesicle. It localises to the secretory vesicle. It is found in the synaptic vesicle membrane. The protein localises to the synapse. The protein resides in the synaptosome. In terms of biological role, unknown, but synaptobrevins are presumed to be involved in targeting and fusion of synaptic vesicles with the presynaptic membrane as well as in neurotransmitter release. This is Synaptobrevin-like protein from Schistosoma mansoni (Blood fluke).